The primary structure comprises 165 residues: 3-hydroxyacyl-[acyl-carrier-protein] dehydratase FabZ (165 aa).

Histidine 64 is a catalytic residue.

It belongs to the thioester dehydratase family. FabZ subfamily.

It localises to the cytoplasm. It catalyses the reaction a (3R)-hydroxyacyl-[ACP] = a (2E)-enoyl-[ACP] + H2O. Its function is as follows. Involved in unsaturated fatty acids biosynthesis. Catalyzes the dehydration of short chain beta-hydroxyacyl-ACPs and long chain saturated and unsaturated beta-hydroxyacyl-ACPs. This chain is 3-hydroxyacyl-[acyl-carrier-protein] dehydratase FabZ, found in Acidiphilium cryptum (strain JF-5).